The following is a 683-amino-acid chain: DNA-directed RNA polymerase subunit beta' (683 aa).

4 residues coordinate Zn(2+): C69, C71, C87, and C90. Mg(2+) is bound by residues D492, D494, and D496.

The protein belongs to the RNA polymerase beta' chain family. RpoC1 subfamily. In plastids the minimal PEP RNA polymerase catalytic core is composed of four subunits: alpha, beta, beta', and beta''. When a (nuclear-encoded) sigma factor is associated with the core the holoenzyme is formed, which can initiate transcription. Mg(2+) is required as a cofactor. The cofactor is Zn(2+).

The protein localises to the plastid. Its subcellular location is the chloroplast. It catalyses the reaction RNA(n) + a ribonucleoside 5'-triphosphate = RNA(n+1) + diphosphate. Functionally, DNA-dependent RNA polymerase catalyzes the transcription of DNA into RNA using the four ribonucleoside triphosphates as substrates. The polypeptide is DNA-directed RNA polymerase subunit beta' (Coffea arabica (Arabian coffee)).